The sequence spans 391 residues: ATP phosphoribosyltransferase regulatory subunit (391 aa).

This sequence belongs to the class-II aminoacyl-tRNA synthetase family. HisZ subfamily. In terms of assembly, heteromultimer composed of HisG and HisZ subunits.

It localises to the cytoplasm. Its pathway is amino-acid biosynthesis; L-histidine biosynthesis; L-histidine from 5-phospho-alpha-D-ribose 1-diphosphate: step 1/9. In terms of biological role, required for the first step of histidine biosynthesis. May allow the feedback regulation of ATP phosphoribosyltransferase activity by histidine. This chain is ATP phosphoribosyltransferase regulatory subunit, found in Prochlorococcus marinus (strain NATL1A).